We begin with the raw amino-acid sequence, 1274 residues long: Regulator of telomere elongation helicase 1 (1274 aa).

One can recognise a Helicase ATP-binding domain in the interval 7–296 (NGVTVDFPFQ…ARVAQHGELQ (290 aa)). ATP is bound at residue 42–49 (SPTGTGKT). 4 residues coordinate [4Fe-4S] cluster: Cys-145, Cys-163, Cys-172, and Cys-207. Positions 151–167 (KKQESNHMQISLCRKKV) match the Nuclear localization signal motif. A DEAH box motif is present at residues 250–253 (DEAH). The Nuclear localization signal motif lies at 871 to 877 (QRGGKKK). 3 disordered regions span residues 982 to 1002 (NSLP…RREL), 1014 to 1038 (RQLD…SKGD), and 1143 to 1198 (ELPC…DDTI). Residues 1186–1196 (QRPDQSARSDD) show a composition bias toward basic and acidic residues.

The protein belongs to the helicase family. RAD3/XPD subfamily. As to quaternary structure, interacts with TERF1. Interacts (via PIP-box) with PCNA; the interaction is direct and essential for suppressing telomere fragility. Interacts with MMS19; the interaction mediates the association of RTEL1 with the cytosolic iron-sulfur protein assembly (CIA) complex.

It is found in the nucleus. The catalysed reaction is ATP + H2O = ADP + phosphate + H(+). Its function is as follows. A probable ATP-dependent DNA helicase implicated in telomere-length regulation, DNA repair and the maintenance of genomic stability. Acts as an anti-recombinase to counteract toxic recombination and limit crossover during meiosis. Regulates meiotic recombination and crossover homeostasis by physically dissociating strand invasion events and thereby promotes noncrossover repair by meiotic synthesis dependent strand annealing (SDSA) as well as disassembly of D loop recombination intermediates. Also disassembles T loops and prevents telomere fragility by counteracting telomeric G4-DNA structures, which together ensure the dynamics and stability of the telomere. This chain is Regulator of telomere elongation helicase 1 (Rtel1), found in Rattus norvegicus (Rat).